The primary structure comprises 516 residues: Amino-acid permease BAT1 (516 aa).

12 helical membrane-spanning segments follow: residues 33–53, 70–90, 113–133, 164–184, 189–209, 232–252, 275–295, 328–348, 383–403, 406–426, 452–472, and 483–503; these read LSVF…TGIT, YGWF…AEIC, PLAS…VTAS, VVIG…SLPI, FIGQ…MILI, LGIT…QYTI, GIIS…LGIS, FGSG…VFFC, VPIN…LTSL, IVAF…AYAI, VVGW…SLPV, and YTPV…LFSA.

It belongs to the amino acid-polyamine-organocation (APC) superfamily. Amino acid/choline transporter (ACT) (TC 2.A.3.4) family. As to expression, expressed in roots, rosette leaves, stems, cauline leaves, flowers and siliques.

It is found in the mitochondrion membrane. Its function is as follows. May play a role in primary carbon metabolism and plant growth, by mediating the transport of GABA from the cytosol to mitochondria. When expressed in a heterologous system (yeast), imports Arg and Ala across the plasma membrane and exports Lys and Glu, but does not transport proline. In Arabidopsis thaliana (Mouse-ear cress), this protein is Amino-acid permease BAT1 (BAT1).